Reading from the N-terminus, the 94-residue chain is Acylphosphatase (94 aa).

The Acylphosphatase-like domain occupies 8–94 (HIRAWVSGKV…ETPPLGFEVC (87 aa)). Residues Arg-23 and Asn-41 contribute to the active site.

It belongs to the acylphosphatase family.

It carries out the reaction an acyl phosphate + H2O = a carboxylate + phosphate + H(+). The protein is Acylphosphatase (acyP) of Hahella chejuensis (strain KCTC 2396).